Reading from the N-terminus, the 273-residue chain is DnaJ homolog subfamily C member 27 (273 aa).

The tract at residues 1-18 (MEANMPKRKEPGRSLRIK) is required for interaction with MAPK1. Residues 23–30 (GNAEVGKS), 71–75 (DMAGH), and 134–137 (NKID) each bind GTP. One can recognise a J domain in the interval 217–273 (GSWDMLGVKPGASRDEVNKACRKLAVLLHPDKCVAPGSEDAFKAVVNARTALLKNIK).

The protein belongs to the small GTPase superfamily. Rab family. As to quaternary structure, interacts directly with MAPK1 (wild-type and kinase-deficient forms). Interacts directly (in GTP-bound form) with MAP2K1 (wild-type and kinase-deficient forms).

It is found in the nucleus. Its function is as follows. GTPase which can activate the MEK/ERK pathway and induce cell transformation when overexpressed. May act as a nuclear scaffold for MAPK1, probably by association with MAPK1 nuclear export signal leading to enhanced ERK1/ERK2 signaling. In Pongo abelii (Sumatran orangutan), this protein is DnaJ homolog subfamily C member 27 (DNAJC27).